A 142-amino-acid chain; its full sequence is Transcription antitermination protein NusB (142 aa).

This sequence belongs to the NusB family.

Its function is as follows. Involved in transcription antitermination. Required for transcription of ribosomal RNA (rRNA) genes. Binds specifically to the boxA antiterminator sequence of the ribosomal RNA (rrn) operons. The sequence is that of Transcription antitermination protein NusB from Levilactobacillus brevis (strain ATCC 367 / BCRC 12310 / CIP 105137 / JCM 1170 / LMG 11437 / NCIMB 947 / NCTC 947) (Lactobacillus brevis).